Reading from the N-terminus, the 1130-residue chain is Putative beta-hexosaminidase (1130 aa).

The first 23 residues, methionine 1–serine 23, serve as a signal peptide directing secretion. Low complexity-rich tracts occupy residues proline 1001 to glutamine 1030 and leucine 1037 to glycine 1072. Disordered regions lie at residues proline 1001 to proline 1075 and glutamine 1102 to glycine 1130.

Belongs to the glycosyl hydrolase 20 family. As to expression, prismatic layer of shell (at protein level). Expressed primarily in the mantle with highest level in the mantle edge and lower level in the mantle pallium.

Its subcellular location is the secreted. It catalyses the reaction Hydrolysis of terminal non-reducing N-acetyl-D-hexosamine residues in N-acetyl-beta-D-hexosaminides.. It participates in glycan degradation; chitin degradation. In Pinctada maxima (Silver-lipped pearl oyster), this protein is Putative beta-hexosaminidase.